Here is a 135-residue protein sequence, read N- to C-terminus: Calcium-binding protein KIC (135 aa).

An EF-hand domain is found at 74–109 (MSKEDAQGMVREGDLDGDGALNQTEFCVLMVRLSPE). The Ca(2+) site is built by D87, D89, D91, and E98.

In terms of assembly, interacts with KCBP (via C-terminus). KIC and calmodulin show competitive binding to KCBP. Interacts with CML42. Binds to ABCG36. As to expression, expressed in stems, leaves and flowers.

Functionally, calcium-binding regulatory protein that interacts with kinesin motor protein KCBP in a calcium-dependent manner. Inhibits KCBP microtubule binding activity and microtubule-stimulated ATPase activity. Involved in the regulation of trichome branching through its interaction with KCBP. This Arabidopsis thaliana (Mouse-ear cress) protein is Calcium-binding protein KIC.